The sequence spans 817 residues: Leucine--tRNA ligase (817 aa).

Residues 40–50 carry the 'HIGH' region motif; it reads PYPSGKLHMGH. The short motif at 578-582 is the 'KMSKS' region element; that stretch reads KMSKS. Position 581 (K581) interacts with ATP.

The protein belongs to the class-I aminoacyl-tRNA synthetase family.

Its subcellular location is the cytoplasm. The enzyme catalyses tRNA(Leu) + L-leucine + ATP = L-leucyl-tRNA(Leu) + AMP + diphosphate. The polypeptide is Leucine--tRNA ligase (Caldicellulosiruptor saccharolyticus (strain ATCC 43494 / DSM 8903 / Tp8T 6331)).